The chain runs to 237 residues: Pyridoxal phosphate homeostasis protein (237 aa).

An N6-(pyridoxal phosphate)lysine modification is found at K31.

This sequence belongs to the pyridoxal phosphate-binding protein YggS/PROSC family.

The protein resides in the cytoplasm. It localises to the nucleus. Pyridoxal 5'-phosphate (PLP)-binding protein, which may be involved in intracellular homeostatic regulation of pyridoxal 5'-phosphate (PLP), the active form of vitamin B6. This Schizosaccharomyces pombe (strain 972 / ATCC 24843) (Fission yeast) protein is Pyridoxal phosphate homeostasis protein.